The following is a 252-amino-acid chain: Cell division protein ZapD (252 aa).

Belongs to the ZapD family. As to quaternary structure, interacts with FtsZ.

The protein resides in the cytoplasm. Cell division factor that enhances FtsZ-ring assembly. Directly interacts with FtsZ and promotes bundling of FtsZ protofilaments, with a reduction in FtsZ GTPase activity. The chain is Cell division protein ZapD from Dechloromonas aromatica (strain RCB).